The following is a 225-amino-acid chain: Deoxyribose-phosphate aldolase (225 aa).

The active-site Proton donor/acceptor is aspartate 96. Residue lysine 157 is the Schiff-base intermediate with acetaldehyde of the active site. Lysine 185 functions as the Proton donor/acceptor in the catalytic mechanism.

This sequence belongs to the DeoC/FbaB aldolase family. DeoC type 1 subfamily.

The protein resides in the cytoplasm. The catalysed reaction is 2-deoxy-D-ribose 5-phosphate = D-glyceraldehyde 3-phosphate + acetaldehyde. The protein operates within carbohydrate degradation; 2-deoxy-D-ribose 1-phosphate degradation; D-glyceraldehyde 3-phosphate and acetaldehyde from 2-deoxy-alpha-D-ribose 1-phosphate: step 2/2. Its function is as follows. Catalyzes a reversible aldol reaction between acetaldehyde and D-glyceraldehyde 3-phosphate to generate 2-deoxy-D-ribose 5-phosphate. The sequence is that of Deoxyribose-phosphate aldolase from Microcystis aeruginosa (strain NIES-843 / IAM M-2473).